We begin with the raw amino-acid sequence, 231 residues long: Putative aminodeoxychorismate lyase (231 aa).

It belongs to the class-IV pyridoxal-phosphate-dependent aminotransferase family. It depends on pyridoxal 5'-phosphate as a cofactor.

It is found in the cytoplasm. Its subcellular location is the nucleus. The enzyme catalyses 4-amino-4-deoxychorismate = 4-aminobenzoate + pyruvate + H(+). It functions in the pathway cofactor biosynthesis; tetrahydrofolate biosynthesis; 4-aminobenzoate from chorismate: step 2/2. Converts 4-amino-4-deoxychorismate into 4-aminobenzoate (PABA) and pyruvate. The sequence is that of Putative aminodeoxychorismate lyase from Schizosaccharomyces pombe (strain 972 / ATCC 24843) (Fission yeast).